The chain runs to 394 residues: MSKEKFERTKPHVNVGTIGHVDHGKTTLTAAITTVLAKTYGGSARAFDQIDNAPEEKARGITINTSHVEYDTPARHYAHVDCPGHADYVKNMITGAAQMDGAILVVAATDGPMPQTREHILLGRQVGVPYIIVFMNKCDMVDDEELLELVEMEVRELLSAYDFPGDDLPVVRGSALKALEGEAEWEAKIIELAGYLDSYIPEPERAIDKPFLLPIEDVFSISGRGTVVTGRVERGIVKVGEEVEIVGIKDTVKSTCTGVEMFRKLLDEGRAGENVGVLLRGIKREDIERGQVLAKPGSIKPHTTFESEVYILSKDEGGRHTPFFKGYRPQFYFRTTDVTGTIELPEGVEMVMPGDNINMIVTLIHPIAMDDGLRFAIREGGRTVGAGVVAKVIA.

The tr-type G domain occupies 10-204; sequence KPHVNVGTIG…YLDSYIPEPE (195 aa). A G1 region spans residues 19–26; that stretch reads GHVDHGKT. A GTP-binding site is contributed by 19–26; that stretch reads GHVDHGKT. Threonine 26 lines the Mg(2+) pocket. The G2 stretch occupies residues 60–64; that stretch reads GITIN. The G3 stretch occupies residues 81-84; that stretch reads DCPG. GTP is bound by residues 81 to 85 and 136 to 139; these read DCPGH and NKCD. Positions 136–139 are G4; that stretch reads NKCD. The G5 stretch occupies residues 174–176; the sequence is SAL.

Belongs to the TRAFAC class translation factor GTPase superfamily. Classic translation factor GTPase family. EF-Tu/EF-1A subfamily. Monomer.

Its subcellular location is the cytoplasm. The enzyme catalyses GTP + H2O = GDP + phosphate + H(+). In terms of biological role, GTP hydrolase that promotes the GTP-dependent binding of aminoacyl-tRNA to the A-site of ribosomes during protein biosynthesis. The polypeptide is Elongation factor Tu 2 (Yersinia pseudotuberculosis serotype O:1b (strain IP 31758)).